Here is a 422-residue protein sequence, read N- to C-terminus: Steroid hormone receptor ERR1 (422 aa).

The tract at residues 1-66 (MSSQVVGIEP…EGAGSGEQGS (66 aa)) is disordered. The tract at residues 1 to 76 (MSSQVVGIEP…GKLVLSSLPK (76 aa)) is repressor domain. A Glycyl lysine isopeptide (Lys-Gly) (interchain with G-Cter in SUMO) cross-link involves residue Lys14. A phosphoserine mark is found at Ser19 and Ser22. A DNA-binding region (nuclear receptor) is located at residues 76–151 (KRLCLVCGDV…VGMLKEGVRL (76 aa)). 2 NR C4-type zinc fingers span residues 79-99 (CLVCGDVASGYHYGVASCEAC) and 115-134 (CPASNECEITKRRRKACQAC). An N6-acetyllysine; by PCAF/KAT2B mark is found at Lys129, Lys138, Lys160, and Lys162. Lys189 is covalently cross-linked (Glycyl lysine isopeptide (Lys-Gly) (interchain with G-Cter in SUMO2)). Residues 192 to 420 (PVNALVSHLL…KLFLEMLEAM (229 aa)) form the NR LBD domain. A Glycyl lysine isopeptide (Lys-Gly) (interchain with G-Cter in SUMO); alternate cross-link involves residue Lys402. A Glycyl lysine isopeptide (Lys-Gly) (interchain with G-Cter in SUMO2); alternate cross-link involves residue Lys402. The AF-2 domain stretch occupies residues 402–422 (KLEGKVPMHKLFLEMLEAMMD).

This sequence belongs to the nuclear hormone receptor family. NR3 subfamily. As to quaternary structure, binds DNA as a monomer or a homodimer. Interacts (via the AF2 domain) with coactivator PPARGC1A (via the L3 motif); the interaction greatly enhances transcriptional activity of genes involved in energy metabolism. Interacts with PIAS4; the interaction enhances sumoylation. Interacts with MAPK15; promotes re-localization of ESRRA to the cytoplasm through a XPO1-dependent mechanism then inhibits ESRRA transcriptional activity. Post-translationally, phosphorylation on Ser-19 enhances sumoylation on Lys-14 increasing repression of transcriptional activity. Sumoylated with SUMO2. Main site is Lys-14 which is enhanced by phosphorylation on Ser-19, cofactor activation, and by interaction with PIAS4. Sumoylation enhances repression of transcriptional activity, but has no effect on subcellular location nor on DNA binding. In terms of processing, reversibly acetylated. Acetylation by PCAF/KAT2 at Lys-129, Lys-138, Lys-160 and Lys-162 and PCAF/KAT2 decreases transcriptional activity probably by inhibiting DNA-binding activity; deacetylation involves SIRT1 and HDAC8 and increases DNA-binding. Most highly expressed in kidney, heart, and brown adipocytes. Also found in uterus, cervix and vagina.

The protein resides in the nucleus. Its subcellular location is the cytoplasm. Its function is as follows. Binds to an ERR-alpha response element (ERRE) containing a single consensus half-site, 5'-TNAAGGTCA-3'. Can bind to the medium-chain acyl coenzyme A dehydrogenase (MCAD) response element NRRE-1 and may act as an important regulator of MCAD promoter. Binds to the C1 region of the lactoferrin gene promoter. Requires dimerization and the coactivator, PGC-1A, for full activity. The ERRalpha/PGC1alpha complex is a regulator of energy metabolism. Induces the expression of PERM1 in the skeletal muscle. The polypeptide is Steroid hormone receptor ERR1 (Esrra) (Mus musculus (Mouse)).